A 102-amino-acid polypeptide reads, in one-letter code: Large ribosomal subunit protein bL21 (102 aa).

Belongs to the bacterial ribosomal protein bL21 family. As to quaternary structure, part of the 50S ribosomal subunit. Contacts protein L20.

In terms of biological role, this protein binds to 23S rRNA in the presence of protein L20. This chain is Large ribosomal subunit protein bL21, found in Limosilactobacillus fermentum (strain NBRC 3956 / LMG 18251) (Lactobacillus fermentum).